A 231-amino-acid polypeptide reads, in one-letter code: DNA mismatch repair protein MutH (231 aa).

It belongs to the MutH family.

The protein resides in the cytoplasm. Functionally, sequence-specific endonuclease that cleaves unmethylated GATC sequences. It is involved in DNA mismatch repair. The polypeptide is DNA mismatch repair protein MutH (Salmonella typhi).